The chain runs to 297 residues: MTIIYGQDIGLIHQKLSQIKSNSPYKTIWFKDLKQLYDLFSQPLFGSNNEKFIVNNCSFLEKTSLTRQENLCLEKLKTTDVVLTVYTDNPFSGIKTIKSITTVFCDKLDWKSMHKAIGEVCRELNLKLDLEIIDWLANALPLNMGVIYQEINKLSLLGKNEIKDNKLVETVICDYQPVQIYKLTKALTNSQIVKAFKYIDELASTKPNFATQFLEFFSGELLLALMVKSCNPKQLTNINLNVNQFRLIAIQSQYHNFTSKVLVNIINAIQKLDIKLKHNDGFAIPLLKNFALSFFTN.

Belongs to the DNA polymerase HolA subunit family. Component of the DNA clamp loading complex consisting of tau(3):delta(1):delta'(1). The DNA polymerase III holoenzyme complex contains at least 10 different subunits organized into 3 functionally essential subassemblies: the Pol III core, the beta sliding clamp processivity factor and the clamp-loading complex. The Pol III core (subunits alpha, epsilon and theta) contains the polymerase and the 3'-5' exonuclease proofreading activities. The polymerase is tethered to the template via the dimeric beta sliding clamp processivity factor. The DNA clamp-loading complex assembles the beta sliding clamp onto the primed template and plays a central role in the organization and communication at the replication fork.

The catalysed reaction is DNA(n) + a 2'-deoxyribonucleoside 5'-triphosphate = DNA(n+1) + diphosphate. Functionally, part of the beta sliding clamp loading complex, which hydrolyzes ATP to load the beta clamp onto primed DNA to form the DNA replication pre-initiation complex. DNA polymerase III is a complex, multichain enzyme responsible for most of the replicative synthesis in bacteria. This DNA polymerase also exhibits 3'-5' exonuclease activity. The delta subunit is the wrench that will open the beta subunit dimer. The DNA clamp loading complex (tau(3),delta,delta') is thought to load beta dimers onto DNA by binding ATP which alters the complex's conformation so it can bind beta sliding clamp dimers and open them at one interface. Primed DNA is recognized, ATP is hydrolyzed releasing the clamp loading complex and closing the beta sliding clamp ring around the primed DNA. The sequence is that of Probable DNA polymerase III subunit delta from Mycoplasma genitalium (strain ATCC 33530 / DSM 19775 / NCTC 10195 / G37) (Mycoplasmoides genitalium).